The sequence spans 131 residues: Small ribosomal subunit protein uS11 (131 aa).

This sequence belongs to the universal ribosomal protein uS11 family. In terms of assembly, part of the 30S ribosomal subunit. Interacts with proteins S7 and S18. Binds to IF-3.

Located on the platform of the 30S subunit, it bridges several disparate RNA helices of the 16S rRNA. Forms part of the Shine-Dalgarno cleft in the 70S ribosome. The sequence is that of Small ribosomal subunit protein uS11 from Wolinella succinogenes (strain ATCC 29543 / DSM 1740 / CCUG 13145 / JCM 31913 / LMG 7466 / NCTC 11488 / FDC 602W) (Vibrio succinogenes).